A 346-amino-acid polypeptide reads, in one-letter code: L-threonine dehydratase catabolic TdcB (346 aa).

59–60 lines the AMP pocket; sequence FT. Position 64 is an N6-(pyridoxal phosphate)lysine (lysine 64). AMP is bound by residues glutamine 94, 125–126, and asparagine 321; that span reads GY.

Belongs to the serine/threonine dehydratase family. As to quaternary structure, in the native structure, TdcB is in a dimeric form, whereas in the TdcB-AMP complex, it exists in a tetrameric form (dimer of dimers). It depends on pyridoxal 5'-phosphate as a cofactor.

The enzyme catalyses L-threonine = 2-oxobutanoate + NH4(+). The protein operates within amino-acid degradation; L-threonine degradation via propanoate pathway; propanoate from L-threonine: step 1/4. Each protein molecule can bind up to four molecules of AMP, which act as an allosteric activator to the enzyme. Catalyzes the anaerobic formation of alpha-ketobutyrate and ammonia from threonine in a two-step reaction. The first step involved a dehydration of threonine and a production of enamine intermediates (aminocrotonate), which tautomerizes to its imine form (iminobutyrate). Both intermediates are unstable and short-lived. The second step is the nonenzymatic hydrolysis of the enamine/imine intermediates to form 2-ketobutyrate and free ammonia. In the low water environment of the cell, the second step is accelerated by RidA. The protein is L-threonine dehydratase catabolic TdcB (tdcB) of Staphylococcus aureus (strain bovine RF122 / ET3-1).